Here is a 257-residue protein sequence, read N- to C-terminus: N-acetylglucosaminyldiphosphoundecaprenol N-acetyl-beta-D-mannosaminyltransferase (257 aa).

This sequence belongs to the glycosyltransferase 26 family. TagA/TarA subfamily.

The enzyme catalyses UDP-N-acetyl-alpha-D-mannosamine + N-acetyl-alpha-D-glucosaminyl-di-trans,octa-cis-undecaprenyl diphosphate = N-acetyl-beta-D-mannosaminyl-(1-&gt;4)-N-acetyl-alpha-D-glucosaminyl di-trans,octa-cis-undecaprenyl diphosphate + UDP + H(+). It functions in the pathway cell wall biogenesis; poly(ribitol phosphate) teichoic acid biosynthesis. Catalyzes the conversion of GlcNAc-PP-undecaprenol into ManNAc-GlcNAc-PP-undecaprenol, the first committed lipid intermediate in the de novo synthesis of teichoic acid. In Bacillus spizizenii (strain ATCC 23059 / NRRL B-14472 / W23) (Bacillus subtilis subsp. spizizenii), this protein is N-acetylglucosaminyldiphosphoundecaprenol N-acetyl-beta-D-mannosaminyltransferase.